Consider the following 136-residue polypeptide: Preprocaerulein type I' (136 aa).

Residues 1-26 (MFKGILLCVLFAVLSANPLSQPEGFA) form the signal peptide. A propeptide spanning residues 27–136 (DEERDVRGLA…NALGGAPQQR (110 aa)) is cleaved from the precursor. Residues 82-101 (GAPQQREANDERRFADDEDD) form a disordered region.

It belongs to the gastrin/cholecystokinin family. Expressed by the skin glands.

It localises to the secreted. The pharmacological activities of caerulein are quite similar to the physiological activities of gastrin and related peptides. The polypeptide is Preprocaerulein type I' (Xenopus laevis (African clawed frog)).